Consider the following 93-residue polypeptide: Small ribosomal subunit protein uS19 (93 aa).

Residues 73 to 93 (EFSPTRTFRGHVKDDRKSKRR) form a disordered region. The span at 83 to 93 (HVKDDRKSKRR) shows a compositional bias: basic and acidic residues.

The protein belongs to the universal ribosomal protein uS19 family.

Protein S19 forms a complex with S13 that binds strongly to the 16S ribosomal RNA. The sequence is that of Small ribosomal subunit protein uS19 from Streptomyces avermitilis (strain ATCC 31267 / DSM 46492 / JCM 5070 / NBRC 14893 / NCIMB 12804 / NRRL 8165 / MA-4680).